A 259-amino-acid polypeptide reads, in one-letter code: Phosphatidylinositol transfer protein 2 (259 aa).

The stretch at 231–259 (LTIEDIRKIEEETKAELAKKLEENKAANK) forms a coiled coil.

The protein belongs to the PtdIns transfer protein family. PI transfer class IIA subfamily.

It localises to the cytoplasm. Its subcellular location is the golgi apparatus. Catalyzes the transfer of PtdIns and phosphatidylcholine between membranes. This is Phosphatidylinositol transfer protein 2 (pitB) from Dictyostelium discoideum (Social amoeba).